Consider the following 699-residue polypeptide: MPRENQKRGRRATEKAKKEASKRKRDEGIEEPTLKRLKPSADEDNAVTAGADYVPLEGEEYDDQYATGAADEMPFYGLLDSEEQEYFSRANEMLELNQFGDAEERRLFVDSVFREARGKELKIACSQSCSRLMEKLISVSDIHQIWRLFNKFIGHFLTLVQHRFASHCCERLFISAAPGVTQKASKTKSKKDDDIEMDEDEEPEPELPLAEMFMKVVEELQGNWGYLLTERFASHTIRVLLLVLAGEPVDVSSNDSVVASRKKERLGVVGGETQENNPSGEKRSVPESFEATLKKVMQDMVSVLDDTYLRALATHPVGNPVLQVLVRLELSHFGKSSAKQPTSIIKRLIPDENFEDDSETTRFIRGLLYDPVGSRLLETMVRCMPGKMFKSLYRNYLRDQMSSLARNQTAGYVVLRVLERLGRDDLHAVMEQIVPKIPSLIERSRTIVPKVLIERCLARGVDTKPIAKALESSYDSDPARRLEQMLRLETAMADNKEKSDKNGPPGESNPGSAAAEKLHGSLLAQTIVTAPGQLSELVFSSLLALSPEVLLSICKDPTASRVIQQALTSPASSPQFRRQFTTRFTSHMNELALDSSGSHVVDALWPATKDIYFIKERMAQELAQNELALRDSFVGRAVWRNWAMDLYKRRRGEWAAKAKGRDITNDSAEKPKSRLDMARARYAAKQSEATGANAVAAKQ.

The segment covering 1-27 (MPRENQKRGRRATEKAKKEASKRKRDE) has biased composition (basic and acidic residues). Positions 1–47 (MPRENQKRGRRATEKAKKEASKRKRDEGIEEPTLKRLKPSADEDNAV) are disordered. Pumilio repeat units lie at residues 115-150 (EARGKELKIACSQSCSRLMEKLISVSDIHQIWRLFN) and 151-186 (KFIGHFLTLVQHRFASHCCERLFISAAPGVTQKASK). The interval 184–204 (ASKTKSKKDDDIEMDEDEEPE) is disordered. A compositionally biased stretch (acidic residues) spans 194–204 (DIEMDEDEEPE). Pumilio repeat units follow at residues 359 to 394 (ETTRFIRGLLYDPVGSRLLETMVRCMPGKMFKSLYR) and 396 to 431 (YLRDQMSSLARNQTAGYVVLRVLERLGRDDLHAVME). Residues 494-514 (DNKEKSDKNGPPGESNPGSAA) are disordered. Pumilio repeat units follow at residues 544 to 581 (ALSPEVLLSICKDPTASRVIQQALTSPASSPQFRRQFT) and 583 to 620 (RFTSHMNELALDSSGSHVVDALWPATKDIYFIKERMAQ).

The protein belongs to the NOP9 family.

The protein resides in the nucleus. Its subcellular location is the nucleolus. RNA-binding nucleolar protein required for pre-rRNA processing. Involved in production of 18S rRNA and assembly of small ribosomal subunit. The chain is Nucleolar protein 9 (nop9) from Emericella nidulans (strain FGSC A4 / ATCC 38163 / CBS 112.46 / NRRL 194 / M139) (Aspergillus nidulans).